Reading from the N-terminus, the 272-residue chain is HMP-PP phosphatase (272 aa).

The active-site Nucleophile is the aspartate 8. Aspartate 8, aspartate 10, and aspartate 212 together coordinate Mg(2+).

The protein belongs to the HAD-like hydrolase superfamily. Cof family. Mg(2+) is required as a cofactor.

It carries out the reaction 4-amino-2-methyl-5-(diphosphooxymethyl)pyrimidine + H2O = 4-amino-2-methyl-5-(phosphooxymethyl)pyrimidine + phosphate + H(+). Its function is as follows. Catalyzes the hydrolysis of 4-amino-2-methyl-5-hydroxymethylpyrimidine pyrophosphate (HMP-PP) to 4-amino-2-methyl-5-hydroxymethylpyrimidine phosphate (HMP-P). The protein is HMP-PP phosphatase of Escherichia coli O6:H1 (strain CFT073 / ATCC 700928 / UPEC).